A 354-amino-acid polypeptide reads, in one-letter code: Glycerol-3-phosphate dehydrogenase [NAD(+)], glycosomal (354 aa).

NAD(+) is bound by residues 15 to 20 (GSGAFG), F90, K118, and A150. K118 serves as a coordination point for substrate. The active-site Proton acceptor is the K203. NAD(+)-binding residues include R267 and E293. Residue 267–268 (RN) coordinates substrate. Positions 352–354 (SKM) match the Microbody targeting signal motif.

This sequence belongs to the NAD-dependent glycerol-3-phosphate dehydrogenase family.

The protein localises to the glycosome. It catalyses the reaction sn-glycerol 3-phosphate + NAD(+) = dihydroxyacetone phosphate + NADH + H(+). The chain is Glycerol-3-phosphate dehydrogenase [NAD(+)], glycosomal (GPD) from Trypanosoma brucei brucei.